The primary structure comprises 1658 residues: MATDGASCEPDFSRAPEDAAGATAEAAKKEFDVDTLSKSELRMLLSVMEGELEARDLVIEALRARRKEVFIQERYGRFNLNDPFLALQRDYEAGAGDKEKKPVCTNPLSILEAVMAHCRKMQERMSTQLAAAESRQKKLEMEKLQLQAVEQEHQKLAARLEEERGKNKHVVLMLVKECKQLSGKVIEEAQKLEEVMVKLEEEKTKTSALEEELSAEKRRSTEMEAQMEKQLSEFDTEREQLRAKLHREEAHTTDLKEEIDKMKKMIEQLKRGNDSKPSLSLPRKTKDRRMVSISVGTEGPVTRSVACQTDLVIESTDHVKKLPLTVPVKPSAGSPLVPANTKGNVCTGAALGRPGIDRQASHGDLIGSSPPTVPPPSANRIEENGPSAGSASSTPPLPNSTAPPTVQTPGIAPQSYSQAPPVHSLHSPCANASLHPGLNPRIQAARFRFQGNANDPDQNGNTTQSPPSRDVSPTSRDNLVAKQLARNTVTQALSRFTSPQAGAPPRPGAAPTGDGGTCPPVGRTSLKTPGVARVDRGNPPPIPPKKPGLSQTPSPPHPQLKVIMDSSRASNAGAKVDNKTMASPPSSLPQGNRVINEENLPKSSSPQLPPKPSIDLTVAPAGCAVSALATSQVGAWPAETPGLNQPACSESSLVIPTTIAFCSSINTVSASSCRTGASDSLLVTASGWSPSLTPLLMSGGPAPLAGRPTLLQQAATQGNVTLLSMLLNEEGLDINYSCEDGHSALYSAAKNGHTDCVRLLLNAGAQVNAADTNGFTPLCAAAAQGHFKCVELLISYDANINHAADEGQTPLYLACKNGNKECIQLLLEAGTDRSVKTRDGWTPVHAAVDTGNVDSLKLLMYHRAPACRNSLHEEESESVVFDLDQGEESPEGTSKPVVPAELINHADREGWTAAHIAASKGFKNCLEILCMHGGLEPERKDKCHRTAHDVATDDCKHLLENLNALKIPLRISVGETEPGSYGSDDFECENTICALNIRKQTSWDDFSKAVSQALTNHFQAISSDGWWSLEDVTLNNTTDSSIGLGTSSVRSIMLGNAPWSAGQSFTQSPWDFMKKNKAERVTVLLSGPQEGCLSSVTYASMIPLQMLQNYLRLVEQYHNVIFHGPEGSLQDYIAHQLALCMKHRQMAAGFTCEIVRAEVDAGFSKEQLIDLFINSACLIPVKQSPVNKKIIIILENLEKSSLSELLGDFLAPLENRSTESPWTFQKGNGTSECYYFHENCFLMGTIAKACLQGSDLLVQQHFRWVQLRWDGEPMQGLLQRFLRRKVVNKFRGQVPSPCDPVCKTVDWALAVWRQLNSCLARLGTPEALLGPKYFLSCPVVPGHAQATVKWMAKLWNAIIAPRVQEAILSRASVKRQPGLGLATAKKHPSQGQQAVVKAALSILLNKAVLHGCPLPRAELDQHAADFRGGSFPLSIVSSYHSYSKKKGESGAWRKVSTSPRKKSGRFSPPSWNKPGLSEEGIRIKAVSQQNCNRNASLSKQKSLENDLSLTLNLDQRLSLGSDDEADLVKELQSMCSSRSESDISKIADSRDDLRRFDGSRNNPAFSTVNPRMPVSPKEVSPLSSHETTECSNSQSKIELGVSRVKSFLPVPRSKVTQCSQNTKRSSSSSNTRQIEINNNTKEDIWNFHQNEQVEKPNQ.

5 disordered regions span residues 1–24 (MATD…GATA), 203–235 (KTKT…SEFD), 348–437 (GAAL…LHPG), 451–475 (GNAN…SPTS), and 495–612 (RFTS…PPKP). Residues 119 to 276 (RKMQERMSTQ…EQLKRGNDSK (158 aa)) adopt a coiled-coil conformation. The span at 214–235 (SAEKRRSTEMEAQMEKQLSEFD) shows a compositional bias: basic and acidic residues. The span at 385 to 394 (GPSAGSASST) shows a compositional bias: low complexity. Positions 399-418 (NSTAPPTVQTPGIAPQSYSQ) are enriched in polar residues. At arginine 495 the chain carries Asymmetric dimethylarginine. Low complexity predominate over residues 509-520 (AAPTGDGGTCPP). Polar residues predominate over residues 580-590 (TMASPPSSLPQ). 6 ANK repeats span residues 706–736 (GRPT…DINY), 740–769 (DGHS…QVNA), 773–802 (NGFT…NINH), 806–835 (EGQT…DRSV), 839–868 (DGWT…PACR), and 909–939 (EGWT…EPER). Positions 1448–1478 (ESGAWRKVSTSPRKKSGRFSPPSWNKPGLSE) are disordered. Position 1521 is a phosphoserine (serine 1521). Disordered stretches follow at residues 1538–1595 (RSES…NSQS) and 1611–1642 (PRSK…NTKE). Basic and acidic residues predominate over residues 1539-1558 (SESDISKIADSRDDLRRFDG). Polar residues-rich tracts occupy residues 1559–1569 (SRNNPAFSTVN) and 1581–1595 (PLSS…NSQS). Positions 1619–1633 (SQNTKRSSSSSNTRQ) are enriched in low complexity.

Interacts with CTTN/cortactin SH3 domain. Interacts with STRN, STRN4/zinedin and MOB4/phocein; this interactions mediate the association with the STRIPAK core complex and may regulate dendritic spine distribution of the STRIPAK complex in hippocampal neurons. Activation of glutamate receptors weakens the interaction with STRN and STRN4.

It localises to the cytoplasm. Its subcellular location is the cell cortex. It is found in the cell projection. The protein resides in the dendritic spine. Functionally, regulates the dendritic spine distribution of CTTN/cortactin in hippocampal neurons, and thus controls dendritic spinogenesis and dendritic spine maintenance. Associates with the striatin-interacting phosphatase and kinase (STRIPAK) core complex to regulate dendritic spine distribution of the STRIPAK complex in hippocampal neurons. The protein is Cortactin-binding protein 2 (CTTNBP2) of Neofelis nebulosa (Clouded leopard).